The primary structure comprises 382 residues: Carboxynorspermidine/carboxyspermidine decarboxylase (382 aa).

N6-(pyridoxal phosphate)lysine is present on Lys-41. Positions 236 and 272 each coordinate substrate.

Belongs to the Orn/Lys/Arg decarboxylase class-II family. NspC subfamily. As to quaternary structure, homodimer. It depends on pyridoxal 5'-phosphate as a cofactor.

It is found in the cytoplasm. It carries out the reaction carboxynorspermidine + H(+) = norspermidine + CO2. It catalyses the reaction carboxyspermidine + H(+) = spermidine + CO2. Functionally, catalyzes the decarboxylation of carboxynorspermidine and carboxyspermidine in vitro. In vivo, responsible for synthesizing spermidine, but not sym-norspermidine. This is Carboxynorspermidine/carboxyspermidine decarboxylase from Campylobacter jejuni subsp. jejuni serotype O:6 (strain 81116 / NCTC 11828).